Consider the following 221-residue polypeptide: PKHD-type hydroxylase P9211_12561 (221 aa).

Residues 80–174 (KVHGTMFTRS…RIVCVGWIQS (95 aa)) form the Fe2OG dioxygenase domain. Residues His-98, Asp-100, and His-155 each coordinate Fe cation. Arg-165 is a 2-oxoglutarate binding site.

Fe(2+) is required as a cofactor. It depends on L-ascorbate as a cofactor.

The sequence is that of PKHD-type hydroxylase P9211_12561 from Prochlorococcus marinus (strain MIT 9211).